The following is a 373-amino-acid chain: 4-hydroxy-3-methylbut-2-en-1-yl diphosphate synthase (flavodoxin) (373 aa).

[4Fe-4S] cluster contacts are provided by C270, C273, C305, and E312.

It belongs to the IspG family. Requires [4Fe-4S] cluster as cofactor.

It catalyses the reaction (2E)-4-hydroxy-3-methylbut-2-enyl diphosphate + oxidized [flavodoxin] + H2O + 2 H(+) = 2-C-methyl-D-erythritol 2,4-cyclic diphosphate + reduced [flavodoxin]. Its pathway is isoprenoid biosynthesis; isopentenyl diphosphate biosynthesis via DXP pathway; isopentenyl diphosphate from 1-deoxy-D-xylulose 5-phosphate: step 5/6. Its function is as follows. Converts 2C-methyl-D-erythritol 2,4-cyclodiphosphate (ME-2,4cPP) into 1-hydroxy-2-methyl-2-(E)-butenyl 4-diphosphate. The polypeptide is 4-hydroxy-3-methylbut-2-en-1-yl diphosphate synthase (flavodoxin) (Pectobacterium atrosepticum (strain SCRI 1043 / ATCC BAA-672) (Erwinia carotovora subsp. atroseptica)).